Consider the following 905-residue polypeptide: Alanine--tRNA ligase (905 aa).

Zn(2+)-binding residues include His582, His586, Cys687, and His691.

Belongs to the class-II aminoacyl-tRNA synthetase family. Requires Zn(2+) as cofactor.

It localises to the cytoplasm. The catalysed reaction is tRNA(Ala) + L-alanine + ATP = L-alanyl-tRNA(Ala) + AMP + diphosphate. Its function is as follows. Catalyzes the attachment of alanine to tRNA(Ala) in a two-step reaction: alanine is first activated by ATP to form Ala-AMP and then transferred to the acceptor end of tRNA(Ala). Also edits incorrectly charged Ser-tRNA(Ala) and Gly-tRNA(Ala) via its editing domain. The sequence is that of Alanine--tRNA ligase from Mycoplasma mobile (strain ATCC 43663 / 163K / NCTC 11711) (Mesomycoplasma mobile).